Here is a 412-residue protein sequence, read N- to C-terminus: Chorismate synthase (412 aa).

Positions 40 and 46 each coordinate NADP(+). Residues 135–137 (RAS), 256–257 (QA), Gly-300, 315–319 (KPIST), and Arg-341 each bind FMN. Basic and acidic residues predominate over residues 391–404 (QREPRQESSDEQPA). Residues 391–412 (QREPRQESSDEQPARRAANTAG) are disordered.

The protein belongs to the chorismate synthase family. As to quaternary structure, homotetramer. FMNH2 is required as a cofactor.

It catalyses the reaction 5-O-(1-carboxyvinyl)-3-phosphoshikimate = chorismate + phosphate. Its pathway is metabolic intermediate biosynthesis; chorismate biosynthesis; chorismate from D-erythrose 4-phosphate and phosphoenolpyruvate: step 7/7. In terms of biological role, catalyzes the anti-1,4-elimination of the C-3 phosphate and the C-6 proR hydrogen from 5-enolpyruvylshikimate-3-phosphate (EPSP) to yield chorismate, which is the branch point compound that serves as the starting substrate for the three terminal pathways of aromatic amino acid biosynthesis. This reaction introduces a second double bond into the aromatic ring system. The protein is Chorismate synthase of Mycobacteroides abscessus (strain ATCC 19977 / DSM 44196 / CCUG 20993 / CIP 104536 / JCM 13569 / NCTC 13031 / TMC 1543 / L948) (Mycobacterium abscessus).